A 309-amino-acid chain; its full sequence is 2-dehydro-3-deoxygluconokinase (309 aa).

Substrate-binding positions include 28–32 (GDTLN), Y88, 102–104 (YWR), and R170. ATP-binding positions include 168–170 (NYR), 228–233 (KRGADS), and 261–264 (AAGD). D264 provides a ligand contact to substrate. Catalysis depends on D264, which acts as the Proton acceptor.

The protein belongs to the carbohydrate kinase pfkB family.

The enzyme catalyses 2-dehydro-3-deoxy-D-gluconate + ATP = 2-dehydro-3-deoxy-6-phospho-D-gluconate + ADP + H(+). It participates in carbohydrate acid metabolism; 2-dehydro-3-deoxy-D-gluconate degradation; D-glyceraldehyde 3-phosphate and pyruvate from 2-dehydro-3-deoxy-D-gluconate: step 1/2. Functionally, catalyzes the phosphorylation of 2-keto-3-deoxygluconate (KDG) to produce 2-keto-3-deoxy-6-phosphogluconate (KDPG). The protein is 2-dehydro-3-deoxygluconokinase (kdgK) of Escherichia coli (strain ATCC 9637 / CCM 2024 / DSM 1116 / LMG 11080 / NBRC 13500 / NCIMB 8666 / NRRL B-766 / W).